A 257-amino-acid chain; its full sequence is Adenylate kinase (257 aa).

Residue 52–57 (GAGKGT) coordinates ATP. An NMP region spans residues 72–101 (ATGDMLRSQVAKKTELGKEAKKIMDQGGLV). AMP is bound by residues Thr73, Arg78, 99–101 (GLV), 128–131 (GFPR), and Gln135. The segment at 169–206 (GRLVHPASGRSYHKIFNPPKNEMLDDITGEPLIQRSDD) is LID. ATP-binding positions include Arg170 and 179–180 (SY). AMP contacts are provided by Arg203 and Arg214. Gln242 contacts ATP.

It belongs to the adenylate kinase family. AK2 subfamily. As to quaternary structure, monomer.

The protein localises to the cytoplasm. Its subcellular location is the cytosol. It is found in the mitochondrion intermembrane space. The enzyme catalyses AMP + ATP = 2 ADP. Functionally, catalyzes the reversible transfer of the terminal phosphate group between ATP and AMP. Plays an important role in cellular energy homeostasis and in adenine nucleotide metabolism. Adenylate kinase activity is critical for regulation of the phosphate utilization and the AMP de novo biosynthesis pathways. The protein is Adenylate kinase (adk1) of Aspergillus clavatus (strain ATCC 1007 / CBS 513.65 / DSM 816 / NCTC 3887 / NRRL 1 / QM 1276 / 107).